The chain runs to 103 residues: Large ribosomal subunit protein bL21 (103 aa).

The protein belongs to the bacterial ribosomal protein bL21 family. In terms of assembly, part of the 50S ribosomal subunit. Contacts protein L20.

Functionally, this protein binds to 23S rRNA in the presence of protein L20. This is Large ribosomal subunit protein bL21 from Rhodococcus jostii (strain RHA1).